An 81-amino-acid chain; its full sequence is Large ribosomal subunit protein bL28 (81 aa).

Belongs to the bacterial ribosomal protein bL28 family. In terms of assembly, part of the 50S ribosomal subunit.

This Deinococcus radiodurans (strain ATCC 13939 / DSM 20539 / JCM 16871 / CCUG 27074 / LMG 4051 / NBRC 15346 / NCIMB 9279 / VKM B-1422 / R1) protein is Large ribosomal subunit protein bL28.